Consider the following 311-residue polypeptide: GTP cyclohydrolase FolE2 (311 aa).

The protein belongs to the GTP cyclohydrolase IV family.

The enzyme catalyses GTP + H2O = 7,8-dihydroneopterin 3'-triphosphate + formate + H(+). The protein operates within cofactor biosynthesis; 7,8-dihydroneopterin triphosphate biosynthesis; 7,8-dihydroneopterin triphosphate from GTP: step 1/1. In terms of biological role, converts GTP to 7,8-dihydroneopterin triphosphate. The chain is GTP cyclohydrolase FolE2 from Xanthomonas campestris pv. campestris (strain B100).